The chain runs to 112 residues: DNA-directed RNA polymerase subunit Rpo11 (112 aa).

Belongs to the archaeal Rpo11/eukaryotic RPB11/RPC19 RNA polymerase subunit family. Part of the RNA polymerase complex.

The protein resides in the cytoplasm. The catalysed reaction is RNA(n) + a ribonucleoside 5'-triphosphate = RNA(n+1) + diphosphate. In terms of biological role, DNA-dependent RNA polymerase (RNAP) catalyzes the transcription of DNA into RNA using the four ribonucleoside triphosphates as substrates. This chain is DNA-directed RNA polymerase subunit Rpo11, found in Methanopyrus kandleri (strain AV19 / DSM 6324 / JCM 9639 / NBRC 100938).